Consider the following 274-residue polypeptide: 2,3,4,5-tetrahydropyridine-2,6-dicarboxylate N-succinyltransferase (274 aa).

Positions 104 and 141 each coordinate substrate.

This sequence belongs to the transferase hexapeptide repeat family. As to quaternary structure, homotrimer.

The protein localises to the cytoplasm. The catalysed reaction is (S)-2,3,4,5-tetrahydrodipicolinate + succinyl-CoA + H2O = (S)-2-succinylamino-6-oxoheptanedioate + CoA. It participates in amino-acid biosynthesis; L-lysine biosynthesis via DAP pathway; LL-2,6-diaminopimelate from (S)-tetrahydrodipicolinate (succinylase route): step 1/3. The chain is 2,3,4,5-tetrahydropyridine-2,6-dicarboxylate N-succinyltransferase from Citrobacter koseri (strain ATCC BAA-895 / CDC 4225-83 / SGSC4696).